A 504-amino-acid chain; its full sequence is Ribosomal protein uS12 methylthiotransferase RimO (504 aa).

Residues K21 to P131 enclose the MTTase N-terminal domain. C30, C66, C95, C186, C190, and C193 together coordinate [4Fe-4S] cluster. A Radical SAM core domain is found at L172–E408. In terms of domain architecture, TRAM spans S411–E487.

The protein belongs to the methylthiotransferase family. RimO subfamily. The cofactor is [4Fe-4S] cluster.

It is found in the cytoplasm. It catalyses the reaction L-aspartate(89)-[ribosomal protein uS12]-hydrogen + (sulfur carrier)-SH + AH2 + 2 S-adenosyl-L-methionine = 3-methylsulfanyl-L-aspartate(89)-[ribosomal protein uS12]-hydrogen + (sulfur carrier)-H + 5'-deoxyadenosine + L-methionine + A + S-adenosyl-L-homocysteine + 2 H(+). In terms of biological role, catalyzes the methylthiolation of an aspartic acid residue of ribosomal protein uS12. The sequence is that of Ribosomal protein uS12 methylthiotransferase RimO from Deinococcus radiodurans (strain ATCC 13939 / DSM 20539 / JCM 16871 / CCUG 27074 / LMG 4051 / NBRC 15346 / NCIMB 9279 / VKM B-1422 / R1).